The chain runs to 141 residues: High mobility group B protein 3 (141 aa).

Composition is skewed to basic and acidic residues over residues 1–12 (MKGAKSKAETRS) and 70–110 (GGEK…LEEG). 2 disordered regions span residues 1–40 (MKGAKSKAETRSTKLSVTKKPAKGAKGAAKDPNKPKRPSS) and 54–141 (KEEH…EDDD). A DNA-binding region (HMG box) is located at residues 35–104 (PKRPSSAFFV…EYEKNMKAYN (70 aa)). Serine 122 is modified (phosphoserine). The segment covering 124–141 (VNDEDDAEDGSEEEEDDD) has biased composition (acidic residues).

This sequence belongs to the HMGB family. As to expression, expressed in lateral roots, root tips, stems, cotyledons, leaves and flowers (excluding ovary and pedicels).

The protein localises to the nucleus. It localises to the cytoplasm. The protein resides in the cytosol. Functionally, binds preferentially double-stranded DNA. The polypeptide is High mobility group B protein 3 (HMGB3) (Arabidopsis thaliana (Mouse-ear cress)).